A 262-amino-acid polypeptide reads, in one-letter code: Adenosylcobinamide-GDP ribazoletransferase (262 aa).

The next 6 membrane-spanning stretches (helical) occupy residues 43 to 63 (YFGL…WLTQ), 66 to 86 (LPAG…TGGF), 120 to 140 (GALA…ELAL), 146 to 166 (AGSA…SIIF), 191 to 211 (LLIL…LAAL), and 242 to 262 (AAQQ…GNIL).

This sequence belongs to the CobS family. Mg(2+) serves as cofactor.

The protein resides in the cell inner membrane. It catalyses the reaction alpha-ribazole + adenosylcob(III)inamide-GDP = adenosylcob(III)alamin + GMP + H(+). The enzyme catalyses alpha-ribazole 5'-phosphate + adenosylcob(III)inamide-GDP = adenosylcob(III)alamin 5'-phosphate + GMP + H(+). The protein operates within cofactor biosynthesis; adenosylcobalamin biosynthesis; adenosylcobalamin from cob(II)yrinate a,c-diamide: step 7/7. Functionally, joins adenosylcobinamide-GDP and alpha-ribazole to generate adenosylcobalamin (Ado-cobalamin). Also synthesizes adenosylcobalamin 5'-phosphate from adenosylcobinamide-GDP and alpha-ribazole 5'-phosphate. This Shewanella baltica (strain OS185) protein is Adenosylcobinamide-GDP ribazoletransferase.